Here is a 321-residue protein sequence, read N- to C-terminus: Lipoyl synthase (321 aa).

[4Fe-4S] cluster contacts are provided by C68, C73, C79, C94, C98, C101, and S308. The Radical SAM core domain maps to 80–297 (FNHGTATFMI…KAEAMAMGFT (218 aa)).

The protein belongs to the radical SAM superfamily. Lipoyl synthase family. Requires [4Fe-4S] cluster as cofactor.

The protein localises to the cytoplasm. The catalysed reaction is [[Fe-S] cluster scaffold protein carrying a second [4Fe-4S](2+) cluster] + N(6)-octanoyl-L-lysyl-[protein] + 2 oxidized [2Fe-2S]-[ferredoxin] + 2 S-adenosyl-L-methionine + 4 H(+) = [[Fe-S] cluster scaffold protein] + N(6)-[(R)-dihydrolipoyl]-L-lysyl-[protein] + 4 Fe(3+) + 2 hydrogen sulfide + 2 5'-deoxyadenosine + 2 L-methionine + 2 reduced [2Fe-2S]-[ferredoxin]. The protein operates within protein modification; protein lipoylation via endogenous pathway; protein N(6)-(lipoyl)lysine from octanoyl-[acyl-carrier-protein]: step 2/2. Catalyzes the radical-mediated insertion of two sulfur atoms into the C-6 and C-8 positions of the octanoyl moiety bound to the lipoyl domains of lipoate-dependent enzymes, thereby converting the octanoylated domains into lipoylated derivatives. This chain is Lipoyl synthase, found in Cronobacter sakazakii (strain ATCC BAA-894) (Enterobacter sakazakii).